We begin with the raw amino-acid sequence, 139 residues long: Large ribosomal subunit protein bL17 (139 aa).

A disordered region spans residues Glu-120–Ala-139.

As to quaternary structure, part of the 50S ribosomal subunit. Contacts protein L32. Post-translationally, may be methylated thrice, on undetermined residues.

The sequence is that of Large ribosomal subunit protein bL17 from Rhodopseudomonas palustris (strain ATCC BAA-98 / CGA009).